The primary structure comprises 345 residues: G-protein coupled receptor family C group 5 member D (345 aa).

Residues methionine 1–glutamate 27 lie on the Extracellular side of the membrane. The helical transmembrane segment at serine 28 to methionine 48 threads the bilayer. Residues arginine 49–glutamine 63 are Cytoplasmic-facing. The helical transmembrane segment at leucine 64 to leucine 84 threads the bilayer. At asparagine 85–tyrosine 93 the chain is on the extracellular side. A helical membrane pass occupies residues phenylalanine 94–leucine 114. Residues valine 115 to serine 123 are Cytoplasmic-facing. Residues phenylalanine 124 to alanine 144 form a helical membrane-spanning segment. Topologically, residues threonine 145–asparagine 167 are extracellular. A helical membrane pass occupies residues valine 168–serine 188. The Cytoplasmic portion of the chain corresponds to lysine 189 to arginine 204. A helical membrane pass occupies residues leucine 205 to leucine 225. Over arginine 226 to aspartate 239 the chain is Extracellular. Residues proline 240–proline 260 form a helical membrane-spanning segment. Residues glutamate 261–valine 345 lie on the Cytoplasmic side of the membrane.

Belongs to the G-protein coupled receptor 3 family. Homodimer. As to expression, widely expressed in the peripheral system. Expression pattern is high in pancreas, medium in kidney, small intestine, spleen and testis, low in lung, colon, leukocyte, prostate and thymus and not detectable in brain, heart, liver, placenta, skeletal muscle and ovary.

Its subcellular location is the cell membrane. In terms of biological role, G-protein coupled receptor involved in hard keratin expression and likely plays a role in the development of hair and nails. This chain is G-protein coupled receptor family C group 5 member D (GPRC5D), found in Homo sapiens (Human).